The following is a 403-amino-acid chain: Cysteine desulfurase IscS (403 aa).

Pyridoxal 5'-phosphate is bound by residues 73-74 (AT), Asn-153, Gln-181, and 201-203 (SAH). Residue Lys-204 is modified to N6-(pyridoxal phosphate)lysine. Thr-241 lines the pyridoxal 5'-phosphate pocket. Cys-326 (cysteine persulfide intermediate) is an active-site residue. Residue Cys-326 participates in [2Fe-2S] cluster binding.

It belongs to the class-V pyridoxal-phosphate-dependent aminotransferase family. NifS/IscS subfamily. Homodimer. Forms a heterotetramer with IscU, interacts with other sulfur acceptors. It depends on pyridoxal 5'-phosphate as a cofactor.

It localises to the cytoplasm. It catalyses the reaction (sulfur carrier)-H + L-cysteine = (sulfur carrier)-SH + L-alanine. It functions in the pathway cofactor biosynthesis; iron-sulfur cluster biosynthesis. Functionally, master enzyme that delivers sulfur to a number of partners involved in Fe-S cluster assembly, tRNA modification or cofactor biosynthesis. Catalyzes the removal of elemental sulfur atoms from cysteine to produce alanine. Functions as a sulfur delivery protein for Fe-S cluster synthesis onto IscU, an Fe-S scaffold assembly protein, as well as other S acceptor proteins. The sequence is that of Cysteine desulfurase IscS from Methylococcus capsulatus (strain ATCC 33009 / NCIMB 11132 / Bath).